A 210-amino-acid chain; its full sequence is MVESVVKNWQGEQVGQKTFELRVAKETTAAHIVHRALVRQQTNARQGTASTKTRAEVRGGGRKPWRQKGTGRARAGSIRSPLWRGGGVIFGPKPRDFDLKMNRKERRLALRTALVSRIDDLILVEEFSNELSRPKTKDLVAAFTRWGAEPESKILLILSEFPENVYLSARNIENLKLIAADQLNVYDLLHADKIVVTTSALEKIQEVYNG.

Residues 41 to 52 (QTNARQGTASTK) show a composition bias toward polar residues. A disordered region spans residues 41-71 (QTNARQGTASTKTRAEVRGGGRKPWRQKGTG). Over residues 60 to 71 (GGRKPWRQKGTG) the composition is skewed to basic residues.

It belongs to the universal ribosomal protein uL4 family. In terms of assembly, part of the 50S ribosomal subunit.

Functionally, one of the primary rRNA binding proteins, this protein initially binds near the 5'-end of the 23S rRNA. It is important during the early stages of 50S assembly. It makes multiple contacts with different domains of the 23S rRNA in the assembled 50S subunit and ribosome. In terms of biological role, forms part of the polypeptide exit tunnel. The chain is Large ribosomal subunit protein uL4 from Trichormus variabilis (strain ATCC 29413 / PCC 7937) (Anabaena variabilis).